Here is a 256-residue protein sequence, read N- to C-terminus: Triosephosphate isomerase (256 aa).

Asparagine 9–lysine 11 contacts substrate. Histidine 95 acts as the Electrophile in catalysis. The active-site Proton acceptor is the glutamate 167. Substrate contacts are provided by residues glycine 173, serine 212, and glycine 233–glycine 234.

This sequence belongs to the triosephosphate isomerase family. Homodimer.

It is found in the cytoplasm. The catalysed reaction is D-glyceraldehyde 3-phosphate = dihydroxyacetone phosphate. It functions in the pathway carbohydrate biosynthesis; gluconeogenesis. Its pathway is carbohydrate degradation; glycolysis; D-glyceraldehyde 3-phosphate from glycerone phosphate: step 1/1. Involved in the gluconeogenesis. Catalyzes stereospecifically the conversion of dihydroxyacetone phosphate (DHAP) to D-glyceraldehyde-3-phosphate (G3P). The polypeptide is Triosephosphate isomerase (Proteus mirabilis (strain HI4320)).